A 213-amino-acid polypeptide reads, in one-letter code: N-(5'-phosphoribosyl)anthranilate isomerase (213 aa).

This sequence belongs to the TrpF family.

It carries out the reaction N-(5-phospho-beta-D-ribosyl)anthranilate = 1-(2-carboxyphenylamino)-1-deoxy-D-ribulose 5-phosphate. It participates in amino-acid biosynthesis; L-tryptophan biosynthesis; L-tryptophan from chorismate: step 3/5. This chain is N-(5'-phosphoribosyl)anthranilate isomerase, found in Hahella chejuensis (strain KCTC 2396).